The following is a 302-amino-acid chain: D-alanine--D-alanine ligase (302 aa).

One can recognise an ATP-grasp domain in the interval 99 to 298; the sequence is KRLFVAEGIP…FEQLIQRIID (200 aa). An ATP-binding site is contributed by 128 to 183; that stretch reads LAALGSPVVVKPADGGSTVGVTIAREAGHLPEAVRLALQYSPQVLIEQYIPGQEIT. Aspartate 252, glutamate 265, and asparagine 267 together coordinate Mg(2+).

This sequence belongs to the D-alanine--D-alanine ligase family. The cofactor is Mg(2+). Mn(2+) serves as cofactor.

The protein resides in the cytoplasm. It catalyses the reaction 2 D-alanine + ATP = D-alanyl-D-alanine + ADP + phosphate + H(+). It functions in the pathway cell wall biogenesis; peptidoglycan biosynthesis. Cell wall formation. This Gloeobacter violaceus (strain ATCC 29082 / PCC 7421) protein is D-alanine--D-alanine ligase.